The following is a 98-amino-acid chain: MSAKAQHYDVIRKPIITEKSTMASENGAVVFEVSIDSNKPQIKEAVESLFGVKVKAVNTTITKGKVKRFRGQLGKRKDVKKAYVTLEEGNTIDVSTGL.

It belongs to the universal ribosomal protein uL23 family. In terms of assembly, part of the 50S ribosomal subunit. Contacts protein L29, and trigger factor when it is bound to the ribosome.

Functionally, one of the early assembly proteins it binds 23S rRNA. One of the proteins that surrounds the polypeptide exit tunnel on the outside of the ribosome. Forms the main docking site for trigger factor binding to the ribosome. This chain is Large ribosomal subunit protein uL23, found in Ruegeria pomeroyi (strain ATCC 700808 / DSM 15171 / DSS-3) (Silicibacter pomeroyi).